The sequence spans 453 residues: Pup--protein ligase (453 aa).

E9 provides a ligand contact to Mg(2+). R53 is a binding site for ATP. Y55 provides a ligand contact to Mg(2+). Catalysis depends on D57, which acts as the Proton acceptor. Residue E63 coordinates Mg(2+). T66 and W420 together coordinate ATP.

Belongs to the Pup ligase/Pup deamidase family. Pup-conjugating enzyme subfamily.

The enzyme catalyses ATP + [prokaryotic ubiquitin-like protein]-L-glutamate + [protein]-L-lysine = ADP + phosphate + N(6)-([prokaryotic ubiquitin-like protein]-gamma-L-glutamyl)-[protein]-L-lysine.. It functions in the pathway protein degradation; proteasomal Pup-dependent pathway. It participates in protein modification; protein pupylation. In terms of biological role, catalyzes the covalent attachment of the prokaryotic ubiquitin-like protein modifier Pup to the proteasomal substrate proteins, thereby targeting them for proteasomal degradation. This tagging system is termed pupylation. The ligation reaction involves the side-chain carboxylate of the C-terminal glutamate of Pup and the side-chain amino group of a substrate lysine. The sequence is that of Pup--protein ligase from Streptomyces avermitilis (strain ATCC 31267 / DSM 46492 / JCM 5070 / NBRC 14893 / NCIMB 12804 / NRRL 8165 / MA-4680).